A 252-amino-acid polypeptide reads, in one-letter code: 3-deoxy-manno-octulosonate cytidylyltransferase (252 aa).

The protein belongs to the KdsB family.

It is found in the cytoplasm. The enzyme catalyses 3-deoxy-alpha-D-manno-oct-2-ulosonate + CTP = CMP-3-deoxy-beta-D-manno-octulosonate + diphosphate. It functions in the pathway nucleotide-sugar biosynthesis; CMP-3-deoxy-D-manno-octulosonate biosynthesis; CMP-3-deoxy-D-manno-octulosonate from 3-deoxy-D-manno-octulosonate and CTP: step 1/1. It participates in bacterial outer membrane biogenesis; lipopolysaccharide biosynthesis. Functionally, activates KDO (a required 8-carbon sugar) for incorporation into bacterial lipopolysaccharide in Gram-negative bacteria. This chain is 3-deoxy-manno-octulosonate cytidylyltransferase, found in Thiobacillus denitrificans (strain ATCC 25259 / T1).